A 328-amino-acid chain; its full sequence is Spermatogenesis- and oogenesis-specific basic helix-loop-helix-containing protein 1 (328 aa).

One can recognise a bHLH domain in the interval 53-104 (SCLRRNVISERERRKRMSLSCERLRALLPQFDGRREDMASVLEMSVQFLRLA). A disordered region spans residues 290 to 328 (EAGSALGSDVDDGTSFLLTAGPSSWPGEWGPGFRAGPPA). The segment covering 310–321 (GPSSWPGEWGPG) has biased composition (low complexity).

Forms both hetero- and homodimers with SOHLH2.

Its subcellular location is the cytoplasm. The protein resides in the nucleus. In terms of biological role, transcription regulator of both male and female germline differentiation. Suppresses genes involved in spermatogonial stem cells maintenance, and induces genes important for spermatogonial differentiation. Coordinates oocyte differentiation without affecting meiosis I. This is Spermatogenesis- and oogenesis-specific basic helix-loop-helix-containing protein 1 (SOHLH1) from Homo sapiens (Human).